A 56-amino-acid polypeptide reads, in one-letter code: Ovomucoid (56 aa).

Residues 6-56 form the Kazal-like domain; sequence VDCSEYPKPACTLEYRPLCGSDSKTYANKCNFCNAVVESNGTLTLSHFGKC. 3 disulfides stabilise this stretch: C8–C38, C16–C35, and C24–C56. N45 is a glycosylation site (N-linked (GlcNAc...) asparagine).

Its subcellular location is the secreted. The protein is Ovomucoid of Oreortyx pictus (Mountain quail).